A 415-amino-acid polypeptide reads, in one-letter code: Serine hydroxymethyltransferase (415 aa).

(6S)-5,6,7,8-tetrahydrofolate is bound by residues Leu-117 and 121-123 (GHL). N6-(pyridoxal phosphate)lysine is present on Lys-225. (6S)-5,6,7,8-tetrahydrofolate contacts are provided by residues Glu-241 and 349–351 (SPF).

Belongs to the SHMT family. Homodimer. Requires pyridoxal 5'-phosphate as cofactor.

It is found in the cytoplasm. It carries out the reaction (6R)-5,10-methylene-5,6,7,8-tetrahydrofolate + glycine + H2O = (6S)-5,6,7,8-tetrahydrofolate + L-serine. It participates in one-carbon metabolism; tetrahydrofolate interconversion. Its pathway is amino-acid biosynthesis; glycine biosynthesis; glycine from L-serine: step 1/1. Catalyzes the reversible interconversion of serine and glycine with tetrahydrofolate (THF) serving as the one-carbon carrier. This reaction serves as the major source of one-carbon groups required for the biosynthesis of purines, thymidylate, methionine, and other important biomolecules. Also exhibits THF-independent aldolase activity toward beta-hydroxyamino acids, producing glycine and aldehydes, via a retro-aldol mechanism. In Campylobacter hominis (strain ATCC BAA-381 / DSM 21671 / CCUG 45161 / LMG 19568 / NCTC 13146 / CH001A), this protein is Serine hydroxymethyltransferase.